Here is a 244-residue protein sequence, read N- to C-terminus: tRNA pseudouridine synthase B (244 aa).

The Nucleophile role is filled by Asp-46.

The protein belongs to the pseudouridine synthase TruB family. Type 1 subfamily.

It carries out the reaction uridine(55) in tRNA = pseudouridine(55) in tRNA. Its function is as follows. Responsible for synthesis of pseudouridine from uracil-55 in the psi GC loop of transfer RNAs. In Bordetella parapertussis (strain 12822 / ATCC BAA-587 / NCTC 13253), this protein is tRNA pseudouridine synthase B.